The chain runs to 215 residues: Cytochrome b6 (215 aa).

The chain crosses the membrane as a helical span at residues 32-52 (IFYCLGGITLTCFLVQVATGF). C35 lines the heme c pocket. 2 residues coordinate heme b: H86 and H100. The next 3 membrane-spanning stretches (helical) occupy residues 90–110 (ASMM…TGGF), 116–136 (LTWV…VTGY), and 186–206 (LHTF…FLMI). Heme b-binding residues include H187 and H202.

Belongs to the cytochrome b family. PetB subfamily. As to quaternary structure, the 4 large subunits of the cytochrome b6-f complex are cytochrome b6, subunit IV (17 kDa polypeptide, PetD), cytochrome f and the Rieske protein, while the 4 small subunits are PetG, PetL, PetM and PetN. The complex functions as a dimer. Heme b serves as cofactor. It depends on heme c as a cofactor.

It is found in the plastid. Its subcellular location is the chloroplast thylakoid membrane. Its function is as follows. Component of the cytochrome b6-f complex, which mediates electron transfer between photosystem II (PSII) and photosystem I (PSI), cyclic electron flow around PSI, and state transitions. The chain is Cytochrome b6 from Marchantia polymorpha (Common liverwort).